A 280-amino-acid polypeptide reads, in one-letter code: MSEAFDCAKCSESLYGRKYIQTDDGPYCVPCYDNTFANTCAECQQLIGHDSRELFYEDRHFHEGCFRCCRCQRSLADEPFTCQDSELLCNDCYCSAFSSQCSACGETVMPGSRKLEYGGQTWHEHCFLCSGCEQPLGSRSFVPDKGAHYCVPCYENKFAPRCARCSKTLTQGGVTYRDQPWHRECLVCTGCQTPLAGQQFTSREDDPYCVTCFGELFAPKCSSCKRPITGLGGGKYVSFEDRHWHHSCFSCARCSTSLVGQGFVPDGDQVLCQGCSQAGP.

N-acetylserine is present on Ser2. The C4-type zinc finger occupies 7 to 31 (CAKCSESLYGRKYIQTDDGPYCVPC). LIM zinc-binding domains lie at 40–92 (CAEC…CNDC) and 101–153 (CSAC…CVPC). At Lys157 the chain carries N6-acetyllysine. 2 LIM zinc-binding domains span residues 162 to 212 (CARC…CVTC) and 221 to 275 (CSSC…CQGC). The residue at position 235 (Lys235) is an N6-acetyllysine.

As to quaternary structure, interacts with SOX15; the interaction recruits FHL3 to FOXK1 promoters where it acts as a transcriptional coactivator of FOXK1.

Its subcellular location is the nucleus. The protein localises to the cytoplasm. Its function is as follows. Recruited by SOX15 to FOXK1 promoters where it acts as a transcriptional coactivator of FOXK1. The protein is Four and a half LIM domains protein 3 (FHL3) of Bos taurus (Bovine).